Consider the following 305-residue polypeptide: MPIRIPDTLPARETLLKEGVAVMTETDAVRQDIRPLQIALLNLMPNKIRTETQIARLIGASPLQVELTLVRVGGHTPKNTSQEHLISFYQTWEEIRERKFDGFIITGAPIEQMPFEEVNYWEELTQIFDWTQTNVHSPFYICWGAMAAAYHFHGLPKYQLEAKAFGVFRHRNLDLASPYLSGFSDDFAIPVSRWTEVRRADVLERQSLRLLIDSDDTGPCLLEDRARRSLYMFNHVEYDSFSLKEEFERDREAGKQIQVPFGYYPGDDPARQPLNRWRSHAHLLFGNWINQTYQSTPFSLDEIGQ.

The Acyl-thioester intermediate role is filled by Cys-142. Lys-163 and Ser-192 together coordinate substrate. His-235 serves as the catalytic Proton acceptor. Residue Glu-237 is part of the active site. A substrate-binding site is contributed by Arg-249.

It belongs to the MetA family.

The protein localises to the cytoplasm. It catalyses the reaction L-homoserine + acetyl-CoA = O-acetyl-L-homoserine + CoA. It functions in the pathway amino-acid biosynthesis; L-methionine biosynthesis via de novo pathway; O-acetyl-L-homoserine from L-homoserine: step 1/1. Its function is as follows. Transfers an acetyl group from acetyl-CoA to L-homoserine, forming acetyl-L-homoserine. This chain is Homoserine O-acetyltransferase, found in Hyphomonas neptunium (strain ATCC 15444).